The chain runs to 998 residues: Regulator of telomere elongation helicase 1 homolog (998 aa).

One can recognise a Helicase ATP-binding domain in the interval 7 to 324; the sequence is AGIPVHFPFE…KEMLLELEKA (318 aa). Position 42–49 (42–49) interacts with ATP; that stretch reads SPTGTGKT. Cys148, Cys166, Cys175, and Cys211 together coordinate [4Fe-4S] cluster. The DEAH box signature appears at 254 to 257; it reads DEAH. Residues 426–454 form a disordered region; the sequence is QNAGKPAPKQQQQGGWLGKGNNTSNSSSS. Thr887 carries the phosphothreonine modification.

This sequence belongs to the helicase family. RAD3/XPD subfamily.

It localises to the nucleus. The catalysed reaction is ATP + H2O = ADP + phosphate + H(+). A probable ATP-dependent DNA helicase implicated in DNA repair and the maintenance of genomic stability. Acts as an anti-recombinase to counteract toxic recombination and limit crossover during meiosis. Regulates meiotic recombination and crossover homeostasis by physically dissociating strand invasion events and thereby promotes noncrossover repair by meiotic synthesis dependent strand annealing (SDSA) as well as disassembly of D loop recombination intermediates. The chain is Regulator of telomere elongation helicase 1 homolog from Drosophila willistoni (Fruit fly).